Consider the following 446-residue polypeptide: Maltoporin (446 aa).

A signal peptide spans 1–25 (MMITLRKLPLAVAVAAGVMSAQAMA).

The protein belongs to the porin LamB (TC 1.B.3) family. In terms of assembly, homotrimer formed of three 18-stranded antiparallel beta-barrels, containing three independent channels.

It is found in the cell outer membrane. The enzyme catalyses beta-maltose(in) = beta-maltose(out). Functionally, involved in the transport of maltose and maltodextrins. This is Maltoporin from Escherichia coli O157:H7 (strain EC4115 / EHEC).